The sequence spans 253 residues: Histone H1.4 (253 aa).

Residues 1 to 33 (MSDVAVAADTTETPAAPTKASKATKASKATKAS) show a composition bias toward low complexity. Residues 1-43 (MSDVAVAADTTETPAAPTKASKATKASKATKASKATKAKTTKV) form a disordered region. N-acetylserine is present on Ser-2. Residues 51–127 (AHPPFINMVT…GANGRFRLAE (77 aa)) enclose the H15 domain. Residues 134 to 253 (KSPAAAKKDA…KKAPAAAPEA (120 aa)) are disordered. 2 stretches are compositionally biased toward basic and acidic residues: residues 139-149 (AKKDATGEKKA) and 188-200 (AAGDKAKKTEVKV). Composition is skewed to basic residues over residues 201 to 210 (KKVKSPKKIA) and 234 to 244 (APKKAAAKPAK).

It belongs to the histone H1/H5 family.

The protein localises to the nucleus. The protein resides in the chromosome. Functionally, histones H1 are necessary for the condensation of nucleosome chains into higher-order structures. The sequence is that of Histone H1.4 (hil-4) from Caenorhabditis elegans.